Reading from the N-terminus, the 1673-residue chain is MNFLSAIESRTAQAASSGTTLLPQFRAPSWQTGMHSSTATELFVTGALQTSGTFPTSALTAYQHPNTFSSRNFATTPSLALQDGTFSAATNGLLSPHDPLLQIKTSQTPTALTFERIGSAVLSTSIPQSSTYRSAQESAPHLLQPQFSLLPSALGGTQQPAQPYSTSVFTGSTASIERALQRECSVIKHHQRPSSTQSVQAQLSGTQHSLPNYLTSVSGVSLHDASRQSSLLCAPLGALTHVSNGGPVQKTSQVSVELSQSYPSVIPSPGYPPSSTKSKNCPTKAPPRSSKTPKSQSVVSPELTQSYTKSSQNQSSVNSSQAQAFSTAQLPSLLSVSQPPIYVSTQSPNLPSASQSQVFSTIKTEKLPPLYKPLTVFSSQSQTITSGSQTLSYSSDQSLSLSSVSSETYSDQTRDLSSANQSQSYSSNNSQGLTSVSQSQVSYSSQSQVMSPVSPSDSYTSGQNQTLASPSLPFSTSSRGQNLSSSSPTQNFISMHPTPNTQDSTSPQSQKFLPSVQPSSFASSPHSQTMQNSRTTADSKSYVKRKSDTNLYASAKQEEKFQMQDLQALQQTALETATPGLSEGELNTQETAYSVSKADDRYSHSVIKSNSRMEEQVLGLQGTKKDERLISPVGHMPQHVGHLNNSASHDGKKNTDLIQSTQVSAKDLSQHTMLHKVLDTKMQEQPSTSPQLQAAMRHSQHLQLPGAQVLLDSGCDLQMFQQSMLQSNMGQTKPSAQMQRIQSPPQVAHPFLQMDGQIIQSNGAQSQQSLHAQGSDVIKMDTSNGKHLQQHLHTKDHFSHRGRLDSKNQFDSLNPMCFSESMLLTDERNFLSHVDDILAATAAQEFAKSSNEENLSVKNQDAKSRFQSLNVRHMSPNFTPPKPQNMNNLSINGSQSAVNLSTVSTTQPKNVSLDQTHIQPMEQDLPSGMVSPVPGANQDDHEKNSENIKNPPNVNQEPKEGGNIQEEVGDAEFLSNNKTLSEENTTTEGDFIMGGDENAALGQVQSHLSKIDPQAGGSSTIEMEEDCPDISQDGQQKGKDKMAIKQFTEDENANLKQIKRNMPLKRSVSKGPDVPGAQYSSHVSEGYYDSYQHQERMRQKIKEVEEKQPEVKTGFIASFLDFLKTGPKQQFSAPAVRVPSRVRRPCTPVIRPPCPGPLSPQSVAGAPVSDSGSASPPKKAEEDLKKNLETLPSFSSDEDDATVGNNDLQKSISTALSALDENSEKRLKTEGDKAALSAKQDPSTPRNGQDKTKAPESLKPSQPEATQPEQLAKSQETIAIEGFTDEENTESGGEGIYRERDEFVVKIEDIELLKEALCTGKEPPAIWKVQKALLQKFIPEIKDGQRSFAATNSYLGYFGDAKTKYKRVYVKFVENANKKEYVRVCSRKPKSKVLQPARTTHTKASGGSKVSETPPPKTAPPKVVSAKPKAKPQKTKAEPPPKKRKQWKEEFSSSQSDSSPDMQSDEEEFAPPPPPIVTRFLNTRAMKETFKGYVELLVGLTLDGDMMQNLEKENDDVLLPHMRKIEGMLNENRRRLLTKLQLEQPLKNALENYPDFAIISRETKSKSAACKIKVNGKWYNKKTLRPAKNPSKQSQEFPVEPEKSQLCSLYHALHHYKYHIYLKCKEEVSSVQKANRDLKQEELVNHCLKNIKWVEDLFEKFGELLSRVQQTCS.

8 disordered regions span residues 265-322 (VIPS…SSQA), 411-543 (DQTR…KSYV), 872-892 (RHMS…LSIN), 923-961 (QDLP…PKEG), 1050-1081 (DENA…QYSS), 1149-1182 (VIRP…KAEE), 1216-1272 (LSAL…EQLA), and 1390-1476 (KSKV…PPPI). Polar residues predominate over residues 289 to 309 (SSKTPKSQSVVSPELTQSYTK). Composition is skewed to low complexity over residues 310 to 322 (SSQN…SSQA) and 411 to 458 (DQTR…PSDS). Over residues 459–539 (YTSGQNQTLA…MQNSRTTADS (81 aa)) the composition is skewed to polar residues. Polar residues predominate over residues 947 to 956 (NIKNPPNVNQ). Positions 1222 to 1233 (NSEKRLKTEGDK) are enriched in basic and acidic residues. Composition is skewed to polar residues over residues 1259-1272 (KPSQ…EQLA) and 1397-1411 (ARTT…SKVS). Basic and acidic residues predominate over residues 1435 to 1451 (TKAEPPPKKRKQWKEEF). The span at 1452–1462 (SSSQSDSSPDM) shows a compositional bias: low complexity.

It localises to the chromosome. Its function is as follows. Plays an essential role in the protection and maintenance of transcriptional and developmental programs. Protects many bivalent promoters and poised enhancers from hypermethylation, showing a marked preference for these regulatory elements over other types of promoters or enhancers. Mechanistically, cooperates with tet1 and binds to DNA in a common complex to inhibit the binding of dnmt3a/3b and therefore de novo methylation. The polypeptide is Glutamine and serine-rich protein 1 (qser1) (Xenopus laevis (African clawed frog)).